Reading from the N-terminus, the 238-residue chain is Ribosomal RNA small subunit methyltransferase G (238 aa).

Residues Gly-78, Phe-83, Ala-129–Glu-130, and Arg-148 each bind S-adenosyl-L-methionine. A disordered region spans residues Glu-216 to Lys-238.

Belongs to the methyltransferase superfamily. RNA methyltransferase RsmG family.

Its subcellular location is the cytoplasm. Specifically methylates the N7 position of a guanine in 16S rRNA. This Lactococcus lactis subsp. lactis (strain IL1403) (Streptococcus lactis) protein is Ribosomal RNA small subunit methyltransferase G.